The sequence spans 61 residues: Temporin-CDYa (61 aa).

The signal sequence occupies residues 1–22 (MFPLKKSLLLLFFLGTINFSFC). A propeptide spanning residues 23 to 44 (EEERNAEEERRDDPEERDVAME) is cleaved from the precursor. A Leucine amide modification is found at Leu59.

It belongs to the frog skin active peptide (FSAP) family. Temporin subfamily. In terms of tissue distribution, expressed by the skin glands.

The protein resides in the secreted. Its function is as follows. Antimicrobial peptide. This Rana dybowskii (Dybovsky's frog) protein is Temporin-CDYa.